The following is a 1701-amino-acid chain: DDB1- and CUL4-associated factor homolog 1 (1701 aa).

Residues 224–245 (HAEQSTSNGTSIPSIKITSVDG) show a composition bias toward polar residues. Disordered regions lie at residues 224–269 (HAEQ…RRTE), 883–906 (DRPASRSINTPILNKPLPSSGNNF), and 932–961 (RPSNAASLSSPAMATRSHSTDDDVFATPTL). Residues 851 to 883 (NQAELLQLIHDHLLKSKLDSVAAMLKSEAKLPD) enclose the LisH domain. Residues 888–906 (RSINTPILNKPLPSSGNNF) are compositionally biased toward polar residues. WD repeat units lie at residues 1086–1125 (DHDESYTKATFSVDDEHLIVGLFNGEVHWINVDTGLDEGH), 1128–1169 (CHGS…QRVH), 1171–1210 (YREDSCVKFANTTMQRIVGTCRDKATVYDTETNHVLDTYL), and 1215–1252 (GLQYEKNYASFSPDDKLIFNDGLLWDVRKKNSAIHVFD). Short sequence motifs (DWD box) lie at residues 1237–1245 (LLWDVRKKN) and 1275–1282 (EVYDIRTF). 3 disordered regions span residues 1384–1559 (IGRL…DINL), 1566–1585 (EARVVENEGNNERPARPVDP), and 1641–1701 (LVRG…DDEA). Composition is skewed to acidic residues over residues 1390 to 1423 (NEDENDEEEDEQREDHDEDEDSDESGDGDDDEEI) and 1451 to 1461 (DDNDTLDDLDF). A compositionally biased stretch (basic residues) spans 1468-1479 (IIRRQAQRRRQR). 2 stretches are compositionally biased toward acidic residues: residues 1494 to 1512 (EGSDEDGDDDEDGEGDPDF) and 1520 to 1543 (DLVDAVDEEVDEDELGTDGDDDDS). Over residues 1567–1581 (ARVVENEGNNERPAR) the composition is skewed to basic and acidic residues. Acidic residues predominate over residues 1667–1678 (DTDEYQSEEEEI).

The protein belongs to the VPRBP/DCAF1 family. Component of the cul4-rbx1-ddb1-dcaf1 E3 ubiquitin-protein ligase complex.

The protein localises to the nucleus. The protein operates within protein modification; protein ubiquitination. In terms of biological role, component of the cul4-rbx1-ddb1-dcaf1 E3 ubiquitin-protein ligase complex, dcaf1 may function as the substrate recognition module within this complex. In Caenorhabditis elegans, this protein is DDB1- and CUL4-associated factor homolog 1 (dcaf-1).